Consider the following 2285-residue polypeptide: Protein Ycf2 (2285 aa).

1638–1645 (GSIGTGRS) is an ATP binding site.

Belongs to the Ycf2 family.

It is found in the plastid. The protein resides in the chloroplast stroma. Probable ATPase of unknown function. Its presence in a non-photosynthetic plant (Epifagus virginiana) and experiments in tobacco indicate that it has an essential function which is probably not related to photosynthesis. The chain is Protein Ycf2 from Populus trichocarpa (Western balsam poplar).